The sequence spans 181 residues: Inner membrane-spanning protein YciB (181 aa).

A run of 5 helical transmembrane segments spans residues 8-28, 53-73, 76-96, 121-141, and 149-169; these read FPIICFFVAYKFWGIYIATAA, ITLIFILLLGSFTLVFHNAIF, WKPTIVYWIFAIVLFGSHFFG, LSWALFFLILGVLNLFVVYNF, and FKLFGTLVLMLVFILGQAFYI.

It belongs to the YciB family.

It localises to the cell inner membrane. Plays a role in cell envelope biogenesis, maintenance of cell envelope integrity and membrane homeostasis. The chain is Inner membrane-spanning protein YciB from Coxiella burnetii (strain CbuG_Q212) (Coxiella burnetii (strain Q212)).